The chain runs to 239 residues: Uracil-DNA glycosylase (239 aa).

Aspartate 65 functions as the Proton acceptor in the catalytic mechanism.

This sequence belongs to the uracil-DNA glycosylase (UDG) superfamily. UNG family.

It localises to the cytoplasm. The enzyme catalyses Hydrolyzes single-stranded DNA or mismatched double-stranded DNA and polynucleotides, releasing free uracil.. Its function is as follows. Excises uracil residues from the DNA which can arise as a result of misincorporation of dUMP residues by DNA polymerase or due to deamination of cytosine. This is Uracil-DNA glycosylase from Levilactobacillus brevis (strain ATCC 367 / BCRC 12310 / CIP 105137 / JCM 1170 / LMG 11437 / NCIMB 947 / NCTC 947) (Lactobacillus brevis).